The sequence spans 365 residues: GTPase Obg (365 aa).

Positions 1-159 (MKFIDEARIE…RMLKLELKVL (159 aa)) constitute an Obg domain. Residues 160-334 (ADVGLLGMPN…LVYAIKDHLA (175 aa)) enclose the OBG-type G domain. GTP-binding positions include 166-173 (GMPNAGKS), 191-195 (FTTLH), 213-216 (DIPG), 284-287 (NKLD), and 315-317 (SAL). Residues S173 and T193 each contribute to the Mg(2+) site.

It belongs to the TRAFAC class OBG-HflX-like GTPase superfamily. OBG GTPase family. As to quaternary structure, monomer. Mg(2+) serves as cofactor.

The protein resides in the cytoplasm. An essential GTPase which binds GTP, GDP and possibly (p)ppGpp with moderate affinity, with high nucleotide exchange rates and a fairly low GTP hydrolysis rate. Plays a role in control of the cell cycle, stress response, ribosome biogenesis and in those bacteria that undergo differentiation, in morphogenesis control. In Cupriavidus metallidurans (strain ATCC 43123 / DSM 2839 / NBRC 102507 / CH34) (Ralstonia metallidurans), this protein is GTPase Obg.